A 184-amino-acid polypeptide reads, in one-letter code: MTSVDSQPDLSAAEAVLGAHVRDVMDFPKPGVVFKDITPLLSTPAAFGVVVGALADLARGLGATTIAGIEARGFLLAAPVADRVGAGIVPIRKQGKLPGRTRSEAYALEYGTAVLEIHEDAVPTGERVLIVDDVLATGGTAAAAHTLLRGCGADVVGLAVLMELTFLSGRDRTGTLDVTSIMKI.

The protein belongs to the purine/pyrimidine phosphoribosyltransferase family. As to quaternary structure, homodimer.

It is found in the cytoplasm. The enzyme catalyses AMP + diphosphate = 5-phospho-alpha-D-ribose 1-diphosphate + adenine. The protein operates within purine metabolism; AMP biosynthesis via salvage pathway; AMP from adenine: step 1/1. Its function is as follows. Catalyzes a salvage reaction resulting in the formation of AMP, that is energically less costly than de novo synthesis. The protein is Adenine phosphoribosyltransferase of Parafrankia sp. (strain EAN1pec).